Consider the following 168-residue polypeptide: Ubiquitin-conjugating enzyme E2 7 (168 aa).

The interval 1–21 is disordered; sequence MATAPARRASSSRSSSEISRT. The UBC core domain maps to 6–166; it reads ARRASSSRSS…VRRAVRKSQE (161 aa). Cys92 (glycyl thioester intermediate) is an active-site residue.

It belongs to the ubiquitin-conjugating enzyme family.

The enzyme catalyses S-ubiquitinyl-[E1 ubiquitin-activating enzyme]-L-cysteine + [E2 ubiquitin-conjugating enzyme]-L-cysteine = [E1 ubiquitin-activating enzyme]-L-cysteine + S-ubiquitinyl-[E2 ubiquitin-conjugating enzyme]-L-cysteine.. It functions in the pathway protein modification; protein ubiquitination. Its function is as follows. Catalyzes the covalent attachment of ubiquitin to other proteins so as to signal them for selective protein degradation. Involved in the formation of multiubiquitin chains. The polypeptide is Ubiquitin-conjugating enzyme E2 7 (UBC7) (Triticum aestivum (Wheat)).